A 235-amino-acid polypeptide reads, in one-letter code: Probable inactive serine protease 37 (235 aa).

Residues 1 to 19 (MKFIFYLSVLTGTFLFADS) form the signal peptide. A Peptidase S1 domain is found at 20–233 (SVQKEDPAPY…YVSWIENTAK (214 aa)). 3 cysteine pairs are disulfide-bonded: Cys-40–Cys-56, Cys-131–Cys-198, and Cys-163–Cys-177.

The protein belongs to the peptidase S1 family.

It is found in the cytoplasmic vesicle. The protein localises to the secretory vesicle. It localises to the acrosome. The protein resides in the secreted. Its function is as follows. Plays a role in male fertility. May have a role in sperm migration or binding to zona-intact eggs. Involved in the activation of the proacrosin/acrosin system. The chain is Probable inactive serine protease 37 from Macaca fascicularis (Crab-eating macaque).